We begin with the raw amino-acid sequence, 312 residues long: Aquaporin-6 (312 aa).

Residues 1-50 (MDDKFDDDALPNSKTTAKDYEDKLPEYDYTTTFPNTWMRLREPFREYFAE) lie on the Cytoplasmic side of the membrane. Residues 51 to 71 (FVGVAVLIIFGVGADCQVVLS) form a helical membrane-spanning segment. Residues 72–89 (ANTGVASSPKGSYLSLNC) are Extracellular-facing. A helical transmembrane segment spans residues 90 to 110 (GWAIGTAMGVWISGGISGGHI). Residues 111 to 113 (NPA) carry the NPA 1 motif. Topologically, residues 111–128 (NPAVTLAMATWRGFPWWK) are cytoplasmic. A helical transmembrane segment spans residues 129-149 (VPGFIFAQLLGGIVGAGLVYV). Topologically, residues 150–183 (NYIHAIDIVEGGRHIRTLDTAGLFATYAADYMTN) are extracellular. Asn183 carries an N-linked (GlcNAc...) asparagine glycan. The chain crosses the membrane as a helical span at residues 184-204 (LSCFFSEFLATAVLIIVIHAM). The Cytoplasmic segment spans residues 205–213 (NDKRNTPPP). A helical transmembrane segment spans residues 214–234 (AGIVPFVLFFLILGIGASLGM). The Extracellular portion of the chain corresponds to 235 to 267 (ETGYAINPARDLGPRMLTAMVGYGRQVFAFRNQ). Residues 241 to 243 (NPA) carry the NPA 2 motif. The chain crosses the membrane as a helical span at residues 268–288 (YWIWCPVLAPFLGAQVGTIFY). Residues 289–312 (DLFFYKGQDNVFGRLGSHIHISPA) are Cytoplasmic-facing.

Belongs to the MIP/aquaporin (TC 1.A.8) family.

It is found in the membrane. It catalyses the reaction H2O(in) = H2O(out). Water channel required to facilitate the transport of water across membranes. Does not mediate the transport carbon dioxide nor nitric oxide across the membrane. Plays a key role in root water transport of mycorrhizal plant such ectomycorrhizal white spruce or trembling aspen via the hydration at the hyphal-root interphase. Contributes in fungal cellular processes during the basidiocarp formation. The polypeptide is Aquaporin-6 (Laccaria bicolor (Bicoloured deceiver)).